The sequence spans 253 residues: Probable transcriptional regulatory protein RPR_05505 (253 aa).

It belongs to the TACO1 family.

The protein resides in the cytoplasm. The polypeptide is Probable transcriptional regulatory protein RPR_05505 (Rickettsia peacockii (strain Rustic)).